The chain runs to 368 residues: Geranylgeranyl pyrophosphate synthase dpfgD (368 aa).

Residues lysine 48, arginine 51, and histidine 80 each coordinate isopentenyl diphosphate. The Mg(2+) site is built by aspartate 87 and aspartate 91. Arginine 96 contacts dimethylallyl diphosphate. Residue arginine 97 participates in isopentenyl diphosphate binding. Dimethylallyl diphosphate is bound by residues lysine 174, threonine 175, and glutamine 208. Aspartate 211 is a Mg(2+) binding site. Positions 215, 225, and 235 each coordinate dimethylallyl diphosphate.

The protein belongs to the FPP/GGPP synthase family. Mg(2+) is required as a cofactor.

The enzyme catalyses isopentenyl diphosphate + dimethylallyl diphosphate = (2E)-geranyl diphosphate + diphosphate. It carries out the reaction isopentenyl diphosphate + (2E)-geranyl diphosphate = (2E,6E)-farnesyl diphosphate + diphosphate. The catalysed reaction is isopentenyl diphosphate + (2E,6E)-farnesyl diphosphate = (2E,6E,10E)-geranylgeranyl diphosphate + diphosphate. Its pathway is secondary metabolite biosynthesis; terpenoid biosynthesis. Functionally, geranylgeranyl pyrophosphate synthase; part of the gene cluster that mediates the biosynthesis of diterpenoid pyrones. The first step of the pathway is the synthesis of the alpha-pyrone moiety by the polyketide synthase dpfgA via condensation of one acetyl-CoA starter unit with 3 malonyl-CoA units and 2 methylations. The alpha-pyrone is then combined with geranylgeranyl pyrophosphate (GGPP) formed by the GGPP synthase dpfgD through the action of the prenyltransferase dpfgC to yield a linear alpha-pyrone diterpenoid. Subsequent steps in the diterpenoid pyrone biosynthetic pathway involve the decalin core formation, which is initiated by the epoxidation of the C10-C11 olefin by the FAD-dependent oxidoreductase dpfgE, and is followed by a cyclization cascade catalyzed by the terpene cyclase dpfgB. The short chain dehydrogenase/reductase dpfgG then oxidizes the 8S hydroxy group to a ketone and the short chain dehydrogenase/reductase dpfgH reduces the ketone to the 8R hydroxy group to yield higginsianin B. Higginsianin B is further methylated by the methyltransferase dpfgI to produce the intermediate named FDDP B. The cytochrome P450 monooxygenase dfgpJ then catalyzes a three-step oxidation at C-27 to generate a carboxylic acid as well as C-26 hydroxylation. Finally, methyltransferase dpfgK methylates the carboxylic acid generated by dpfgJ, yielding the final diterpenoid pyrones from the pathway which were named FDDP D and FDDP E. This is Geranylgeranyl pyrophosphate synthase dpfgD from Gibberella zeae (strain ATCC MYA-4620 / CBS 123657 / FGSC 9075 / NRRL 31084 / PH-1) (Wheat head blight fungus).